The primary structure comprises 306 residues: Ornithine carbamoyltransferase (306 aa).

Residues 53-56, Gln80, Arg104, and 131-134 each bind carbamoyl phosphate; these read STRT and HPCQ. Residues Asn162, Asp220, and 224–225 contribute to the L-ornithine site; that span reads SM. Residues 260–261 and Arg288 contribute to the carbamoyl phosphate site; that span reads CL.

This sequence belongs to the aspartate/ornithine carbamoyltransferase superfamily. OTCase family.

It localises to the cytoplasm. The catalysed reaction is carbamoyl phosphate + L-ornithine = L-citrulline + phosphate + H(+). It participates in amino-acid biosynthesis; L-arginine biosynthesis; L-arginine from L-ornithine and carbamoyl phosphate: step 1/3. In terms of biological role, reversibly catalyzes the transfer of the carbamoyl group from carbamoyl phosphate (CP) to the N(epsilon) atom of ornithine (ORN) to produce L-citrulline. The protein is Ornithine carbamoyltransferase of Dechloromonas aromatica (strain RCB).